A 957-amino-acid polypeptide reads, in one-letter code: MTQTLSQLENRGAFIERHIGPDAAQQQEMLNAVGAESLNALTGQIVPKDIQLATPPQVGEAATEYAALAELKAIAGRNKRFTSYIGMGYTAVQLPPVILRNMLENPGWYTAYTPYQPEVSQGRLEALLNFQQVTLDLTGLDMASASLLDEATAAAEAMAMAKRVSKLKNANRFFVASDVHPQTLDVVRTRAETFGFDVIVDDAAKALDHQDVFGVLLQQVGTTGEIHDYSALITELKSRKVVVSVAADFMALVLLTAPGKQGADIVFGSAQRFGVPMGYGGPHAAFFAAKDEFKRSMPGRIIGVSKDAAGNTALRMAMQTREQHIRREKANSNICTSQVLLANIASLYAVYHGPVGLKRIANRIHRLTDILAAGLQQKGLKLRHAHYFDTLCVEVADKAAVLARAEAAEINLRSDIHNAVGITLDETTTRENVAQLFNVLLGDSHGLNIETLDKDVALDSRSIQQSMLRDDAILTHPVFNRYHSETEMMRYMHSLERKDLALNQAMIPLGSCTMKLNAAAEMIPITWPEFAELHPFCPPEQAEGYHQMISQLSDWLVKLTGYDAVCMQPNSGAQGEYAGLLAIRHYHESRNEGHRDICLIPASAHGTNPASAHMAGMQVVVVACDKNGNIDLDDLRAKAEQHAANLSCIMVTYPSTHGVYEETIREVCEVVHQFGGQVYLDGANMNAQVGITSPGFIGADVSHLNLHKTFCIPHGGGGPGMGPIGVKAHLAPFVPGHSVVQIEGMLTRQGAVSAAPFGSASILPISWMYIRMMGAEGLKQASQVAILNANYIASRLKDAYPVLYTGRDGRVAHECILDIRPLKEETGISELDIAKRLIDYGFHAPTMSFPVAGTLMVEPTESEGKAELDRFIDAMLAIRAEIDQVKAGVWPLEDNPLVNAPHIQSELVAEWAHPYSREVAVFPAGVADKYWPTVKRLDDVYGDRNLFCSCVPISDYQ.

Lys-708 carries the N6-(pyridoxal phosphate)lysine modification.

This sequence belongs to the GcvP family. The glycine cleavage system is composed of four proteins: P, T, L and H. Requires pyridoxal 5'-phosphate as cofactor.

The enzyme catalyses N(6)-[(R)-lipoyl]-L-lysyl-[glycine-cleavage complex H protein] + glycine + H(+) = N(6)-[(R)-S(8)-aminomethyldihydrolipoyl]-L-lysyl-[glycine-cleavage complex H protein] + CO2. Its function is as follows. The glycine cleavage system catalyzes the degradation of glycine. The P protein binds the alpha-amino group of glycine through its pyridoxal phosphate cofactor; CO(2) is released and the remaining methylamine moiety is then transferred to the lipoamide cofactor of the H protein. This is Glycine dehydrogenase (decarboxylating) from Salmonella typhimurium (strain LT2 / SGSC1412 / ATCC 700720).